A 574-amino-acid polypeptide reads, in one-letter code: Galactose transporter (574 aa).

Positions 1–57 (MAVEENNMPVVSQQPQAGEDVISSLSKDSHLSAQSQKYSNDELKAGESGSEGSQSVP) are disordered. Over 1–70 (MAVEENNMPV…PKKPMSEYVT (70 aa)) the chain is Cytoplasmic. Positions 23 to 38 (SSLSKDSHLSAQSQKY) are enriched in polar residues. Phosphoserine occurs at positions 32, 35, 39, 48, 50, 53, and 55. A helical membrane pass occupies residues 71–91 (VSLLCLCVAFGGFMFGWDTGT). Topologically, residues 92–121 (ISGFVVQTDFLRRFGMKHKDGTHYLSNVRT) are extracellular. The chain crosses the membrane as a helical span at residues 122–142 (GLIVAIFNIGCAFGGIILSKG). At 143–149 (GDMYGRK) the chain is on the cytoplasmic side. The chain crosses the membrane as a helical span at residues 150-170 (KGLSIVVSVYIVGIIIQIASI). Over 171–175 (NKWYQ) the chain is Extracellular. A helical transmembrane segment spans residues 176 to 196 (YFIGRIISGLGVGGIAVLCPM). Residues 197–207 (LISEIAPKHLR) lie on the Cytoplasmic side of the membrane. The chain crosses the membrane as a helical span at residues 208-228 (GTLVSCYQLMITAGIFLGYCT). Topologically, residues 229-242 (NYGTKSYSNSVQWR) are extracellular. A helical membrane pass occupies residues 243 to 263 (VPLGLCFAWSLFMIGALTLVP). Topologically, residues 264–342 (ESPRYLCEVN…MGVFVQMFQQ (79 aa)) are cytoplasmic. The helical transmembrane segment at 343-362 (LTGNNYFFYYGTVIFKSVGL) threads the bilayer. Over 363–366 (DDSF) the chain is Extracellular. Residues 367–387 (ETSIVIGVVNFASTFFSLWTV) form a helical membrane-spanning segment. Topologically, residues 388–394 (ENLGHRK) are cytoplasmic. The chain crosses the membrane as a helical span at residues 395 to 415 (CLLLGAATMMACMVIYASVGV). The Extracellular segment spans residues 416-435 (TRLYPHGKSQPSSKGAGNCM). Residues 436–456 (IVFTCFYIFCYATTWAPVAWV) form a helical membrane-spanning segment. The Cytoplasmic portion of the chain corresponds to 457–472 (ITAESFPLRVKSKCMA). Residues 473–493 (LASASNWVWGFLIAFFTPFIT) form a helical membrane-spanning segment. The Extracellular portion of the chain corresponds to 494 to 499 (SAINFY). Residues 500–520 (YGYVFMGCLVAMFFYVFFFVP) traverse the membrane as a helical segment. The Cytoplasmic portion of the chain corresponds to 521-574 (ETKGLSLEEIQELWEEGVLPWKSEGWIPSSRRGNNYDLEDLQHDDKPWYKAMLE).

Belongs to the major facilitator superfamily. Sugar transporter (TC 2.A.1.1) family.

It localises to the membrane. GAL2 is a facilitated diffusion transporter required for both the high-affinity galactokinase-dependent and low-affinity galactokinase-independent galactose transport processes. The polypeptide is Galactose transporter (GAL2) (Saccharomyces cerevisiae (strain ATCC 204508 / S288c) (Baker's yeast)).